We begin with the raw amino-acid sequence, 120 residues long: Large ribosomal subunit protein bL12 (120 aa).

Belongs to the bacterial ribosomal protein bL12 family. In terms of assembly, homodimer. Part of the ribosomal stalk of the 50S ribosomal subunit. Forms a multimeric L10(L12)X complex, where L10 forms an elongated spine to which 2 to 4 L12 dimers bind in a sequential fashion. Binds GTP-bound translation factors.

Its function is as follows. Forms part of the ribosomal stalk which helps the ribosome interact with GTP-bound translation factors. Is thus essential for accurate translation. This chain is Large ribosomal subunit protein bL12, found in Listeria innocua serovar 6a (strain ATCC BAA-680 / CLIP 11262).